We begin with the raw amino-acid sequence, 90 residues long: LYR motif-containing protein 2 (90 aa).

A mitochondrion-targeting transit peptide spans 1 to 19; that stretch reads MASSRLPASALTLKQFIQR.

It belongs to the complex I LYR family.

The protein resides in the mitochondrion. Its function is as follows. Involved in efficient integration of the N-module into mitochondrial respiratory chain complex I. This Salmo salar (Atlantic salmon) protein is LYR motif-containing protein 2 (lyrm2).